Consider the following 446-residue polypeptide: MEYTSSPKPQLSSRANAFSIAALMSSGKTKDKESEENTIKPLEQFVEKSSCHPNLGDLPPLETHSDFSSGGGTGSGAPLCTEPLIPTTPGVPSEEMAKISCSLETKELWDKFHELGTEMIITKSGRRMFPTIRVSFSGVDPDAKYIVLMDIVPVDNKRYRYAYHRSSWLVAGKADPPLPARLYVHPDSPFTGEQLLKQMVSFEKVKLTNNELDQHGHIILNSMHKYQPRVHIIKKKDHTASLLNLKSEEFRTFVFTETVFTAVTAYQNQLITRLKIDSNPFAKGFRDSSRLTDIERESVESLIHKHSYARSPIRTYAGDEETLGEEGHSAHSRGSAFTASDNLSLSSWVTTTSGFSGFQHPQSLSAIGTSTASLASPLPHPIQGSLPPYSRLGMPLTPSALASSMQATGPTFPSFHMPRYHHYFQQGPYAAIQGLRHSSTVMTPFV.

Residues 50–80 (SCHPNLGDLPPLETHSDFSSGGGTGSGAPLC) are disordered. A DNA-binding region (T-box) is located at residues 108–287 (LWDKFHELGT…SNPFAKGFRD (180 aa)).

Its subcellular location is the nucleus. In terms of biological role, transcriptional regulator that may play a very early role in the differentiation of the cardiac precursors. The sequence is that of T-box transcription factor TBX20 (tbx20) from Danio rerio (Zebrafish).